We begin with the raw amino-acid sequence, 331 residues long: Nodulation protein D 2 (331 aa).

The HTH lysR-type domain maps to 6–63 (LDLNLLVALDALMTERSLTAAARKINLSQPAMSAAVARLRSYFRDELFAMRGRKLVPT). Residues 23-42 (LTAAARKINLSQPAMSAAVA) constitute a DNA-binding region (H-T-H motif).

The protein belongs to the LysR transcriptional regulatory family.

In terms of biological role, nodD regulates the expression of the nodABCFE genes which encode other nodulation proteins. NodD is also a negative regulator of its own expression. Binds flavonoids as inducers. This chain is Nodulation protein D 2 (nodD2), found in Bradyrhizobium elkanii.